Reading from the N-terminus, the 181-residue chain is ATP synthase subunit delta (181 aa).

The protein belongs to the ATPase delta chain family. F-type ATPases have 2 components, F(1) - the catalytic core - and F(0) - the membrane proton channel. F(1) has five subunits: alpha(3), beta(3), gamma(1), delta(1), epsilon(1). F(0) has three main subunits: a(1), b(2) and c(10-14). The alpha and beta chains form an alternating ring which encloses part of the gamma chain. F(1) is attached to F(0) by a central stalk formed by the gamma and epsilon chains, while a peripheral stalk is formed by the delta and b chains.

The protein localises to the cell inner membrane. Its function is as follows. F(1)F(0) ATP synthase produces ATP from ADP in the presence of a proton or sodium gradient. F-type ATPases consist of two structural domains, F(1) containing the extramembraneous catalytic core and F(0) containing the membrane proton channel, linked together by a central stalk and a peripheral stalk. During catalysis, ATP synthesis in the catalytic domain of F(1) is coupled via a rotary mechanism of the central stalk subunits to proton translocation. In terms of biological role, this protein is part of the stalk that links CF(0) to CF(1). It either transmits conformational changes from CF(0) to CF(1) or is implicated in proton conduction. This chain is ATP synthase subunit delta, found in Protochlamydia amoebophila (strain UWE25).